The primary structure comprises 524 residues: uncharacterized protein (524 aa).

Residues 1–21 (MLLRSVWYKLGSLLIILPLTG) form the signal peptide. Cys22 carries the N-palmitoyl cysteine lipid modification. Residue Cys22 is the site of S-diacylglycerol cysteine attachment.

It belongs to the MG067/MG068/MG395 family.

Its subcellular location is the cell membrane. This is an uncharacterized protein from Mycoplasma pneumoniae (strain ATCC 29342 / M129 / Subtype 1) (Mycoplasmoides pneumoniae).